Reading from the N-terminus, the 405-residue chain is Peroxisomal membrane protein PEX13 (405 aa).

A compositionally biased stretch (pro residues) spans 1–11 (MASQPPPPPKP). Positions 1-71 (MASQPPPPPK…SQQTGSNNVN (71 aa)) are disordered. The Peroxisomal matrix portion of the chain corresponds to 1–136 (MASQPPPPPK…SSRGAFQSIE (136 aa)). Residues 61 to 71 (PSQQTGSNNVN) are compositionally biased toward polar residues. Residues 137–157 (SIVHAFASVSMMMDATFSAVY) form a helical membrane-spanning segment. A targeting to peroxisomes region spans residues 147 to 235 (MMMDATFSAV…EDQATNSAKS (89 aa)). Topologically, residues 158-176 (NSFRAVLDVANHFSRLKIH) are cytoplasmic. Residues 177-194 (FTKVFSAFALVRTIRYLY) traverse the membrane as a helical segment. Positions 177-198 (FTKVFSAFALVRTIRYLYRRLQ) are interaction with PEX19. Topologically, residues 195-235 (RRLQWMMGLRRGSENEDLWAESEGTVACLSAEDQATNSAKS) are peroxisomal matrix. The chain crosses the membrane as a helical span at residues 236-256 (WPIFLFFAVILGGPYLIWKLL). The Cytoplasmic portion of the chain corresponds to 257-405 (STHNDEVTDN…TGKNGDKQDL (149 aa)). The SH3 domain maps to 274–338 (DDHVVARAEY…PANYVKILGK (65 aa)). S356 bears the Phosphoserine mark.

It belongs to the peroxin-13 family. In terms of assembly, interacts (via SH3 domain) with PEX14 (via SH3-binding motif); forming the PEX13-PEX14 docking complex. Interacts with PEX19.

The protein localises to the peroxisome membrane. In terms of biological role, component of the PEX13-PEX14 docking complex, a translocon channel that specifically mediates the import of peroxisomal cargo proteins bound to PEX5 receptor. The PEX13-PEX14 docking complex forms a large import pore which can be opened to a diameter of about 9 nm. Mechanistically, PEX5 receptor along with cargo proteins associates with the PEX14 subunit of the PEX13-PEX14 docking complex in the cytosol, leading to the insertion of the receptor into the organelle membrane with the concomitant translocation of the cargo into the peroxisome matrix. Involved in the import of PTS1- and PTS2-type containing proteins. The chain is Peroxisomal membrane protein PEX13 from Mus musculus (Mouse).